Here is a 120-residue protein sequence, read N- to C-terminus: Large ribosomal subunit protein bL36m (120 aa).

This sequence belongs to the bacterial ribosomal protein bL36 family. In terms of assembly, component of the mitochondrial ribosome large subunit (39S) which comprises a 16S rRNA and about 50 distinct proteins.

It localises to the mitochondrion. In Osmerus mordax (Rainbow smelt), this protein is Large ribosomal subunit protein bL36m (mrpl36).